We begin with the raw amino-acid sequence, 608 residues long: Tectonic-3 (608 aa).

The N-terminal stretch at 1-22 (MRTPQLALLQVFLLMFPDGVRP) is a signal peptide. The tract at residues 23 to 58 (QPSSSPSGAVPTSLDLQPGTVGGTLQSSSEATATRP) is disordered. At 23-586 (QPSSSPSGAV…AFSRGVSSQK (564 aa)) the chain is on the extracellular side. Polar residues predominate over residues 45-54 (GTLQSSSEAT). Residues Asn78, Asn179, and Asn347 are each glycosylated (N-linked (GlcNAc...) asparagine). The helical transmembrane segment at 587 to 607 (CSVSPVLILCLLLLGVLNLET) threads the bilayer. A topological domain (cytoplasmic) is located at residue Thr608.

The protein belongs to the tectonic family. As to quaternary structure, part of the tectonic-like complex (also named B9 complex).

Its subcellular location is the membrane. Its function is as follows. Part of the tectonic-like complex which is required for tissue-specific ciliogenesis and may regulate ciliary membrane composition. May be involved in apoptosis regulation. Necessary for signal transduction through the sonic hedgehog (Shh) signaling pathway. In Macaca fascicularis (Crab-eating macaque), this protein is Tectonic-3 (TCTN3).